A 262-amino-acid polypeptide reads, in one-letter code: Histone chaperone cia1 (262 aa).

The interval 157-262 (IQWDNPDFDD…KPEEKPETSQ (106 aa)) is disordered. 2 coiled-coil regions span residues 173 to 196 (DADE…EGEG) and 223 to 253 (KGSE…AEEK). Acidic residues-rich tracts occupy residues 173-219 (DADE…GEGE) and 226-242 (EEEE…EEES). The segment covering 250 to 262 (AEEKPEEKPETSQ) has biased composition (basic and acidic residues).

The protein belongs to the ASF1 family. Interacts with histone H3 and histone H4.

It is found in the nucleus. In terms of biological role, histone chaperone that facilitates histone deposition and histone exchange and removal during nucleosome assembly and disassembly. This chain is Histone chaperone cia1 (cia1), found in Schizosaccharomyces pombe (strain 972 / ATCC 24843) (Fission yeast).